The primary structure comprises 122 residues: Large ribosomal subunit protein uL14c (122 aa).

Belongs to the universal ribosomal protein uL14 family. As to quaternary structure, part of the 50S ribosomal subunit.

It localises to the plastid. The protein localises to the chloroplast. Its function is as follows. Binds to 23S rRNA. This chain is Large ribosomal subunit protein uL14c, found in Cryptomeria japonica (Japanese cedar).